The primary structure comprises 674 residues: tRNA 5-methylaminomethyl-2-thiouridine biosynthesis bifunctional protein MnmC (674 aa).

Residues 1–248 are tRNA (mnm(5)s(2)U34)-methyltransferase; sequence MAASSLPSHN…KREMCFGRYA (248 aa). Residues 276–674 are FAD-dependent cmnm(5)s(2)U34 oxidoreductase; the sequence is IGAGLAGATV…AIRHWRSGKR (399 aa).

This sequence in the N-terminal section; belongs to the methyltransferase superfamily. tRNA (mnm(5)s(2)U34)-methyltransferase family. It in the C-terminal section; belongs to the DAO family. Requires FAD as cofactor.

The protein localises to the cytoplasm. It carries out the reaction 5-aminomethyl-2-thiouridine(34) in tRNA + S-adenosyl-L-methionine = 5-methylaminomethyl-2-thiouridine(34) in tRNA + S-adenosyl-L-homocysteine + H(+). Functionally, catalyzes the last two steps in the biosynthesis of 5-methylaminomethyl-2-thiouridine (mnm(5)s(2)U) at the wobble position (U34) in tRNA. Catalyzes the FAD-dependent demodification of cmnm(5)s(2)U34 to nm(5)s(2)U34, followed by the transfer of a methyl group from S-adenosyl-L-methionine to nm(5)s(2)U34, to form mnm(5)s(2)U34. The sequence is that of tRNA 5-methylaminomethyl-2-thiouridine biosynthesis bifunctional protein MnmC from Hydrogenovibrio crunogenus (strain DSM 25203 / XCL-2) (Thiomicrospira crunogena).